The chain runs to 449 residues: Glutamate--tRNA ligase 1 (449 aa).

The 'HIGH' region motif lies at 11-21 (PSPTGSLHVGN). Positions 242 to 246 (PLSKR) match the 'KMSKS' region motif. Lysine 245 contacts ATP.

Belongs to the class-I aminoacyl-tRNA synthetase family. Glutamate--tRNA ligase type 1 subfamily. As to quaternary structure, monomer.

The protein resides in the cytoplasm. The enzyme catalyses tRNA(Glu) + L-glutamate + ATP = L-glutamyl-tRNA(Glu) + AMP + diphosphate. Functionally, catalyzes the attachment of glutamate to tRNA(Glu) in a two-step reaction: glutamate is first activated by ATP to form Glu-AMP and then transferred to the acceptor end of tRNA(Glu). This chain is Glutamate--tRNA ligase 1, found in Parvibaculum lavamentivorans (strain DS-1 / DSM 13023 / NCIMB 13966).